Here is a 151-residue protein sequence, read N- to C-terminus: Secreted RxLR effector protein 30 (151 aa).

The signal sequence occupies residues 1–19 (MRSSTILIVLGIAILAVNG). The short motif at 38 to 53 (RLLRSTSTEHETDEER) is the RxLR-dEER element.

It belongs to the RxLR effector family.

It localises to the secreted. It is found in the host nucleus. In terms of biological role, effector that acts as a broad suppressor of cell death to interrupt plant immunity. Inhibits cell death induced by cell death-inducing proteins, including the PAMP elicitor INF1 from P.infestans. This Plasmopara viticola (Downy mildew of grapevine) protein is Secreted RxLR effector protein 30.